The sequence spans 163 residues: D-aminoacyl-tRNA deacylase (163 aa).

The short motif at 141 to 142 (GP) is the Gly-cisPro motif, important for rejection of L-amino acids element.

It belongs to the DTD family. In terms of assembly, homodimer.

Its subcellular location is the cytoplasm. The enzyme catalyses glycyl-tRNA(Ala) + H2O = tRNA(Ala) + glycine + H(+). It carries out the reaction a D-aminoacyl-tRNA + H2O = a tRNA + a D-alpha-amino acid + H(+). An aminoacyl-tRNA editing enzyme that deacylates mischarged D-aminoacyl-tRNAs. Also deacylates mischarged glycyl-tRNA(Ala), protecting cells against glycine mischarging by AlaRS. Acts via tRNA-based rather than protein-based catalysis; rejects L-amino acids rather than detecting D-amino acids in the active site. By recycling D-aminoacyl-tRNA to D-amino acids and free tRNA molecules, this enzyme counteracts the toxicity associated with the formation of D-aminoacyl-tRNA entities in vivo and helps enforce protein L-homochirality. This Neisseria gonorrhoeae (strain ATCC 700825 / FA 1090) protein is D-aminoacyl-tRNA deacylase.